The sequence spans 310 residues: Formyltetrahydrofolate deformylase (310 aa).

A disordered region spans residues 1-30; sequence MGKGSMTAHATPNEPDYPPPPGGPPPPADI. Positions 15–28 are enriched in pro residues; sequence PDYPPPPGGPPPPA. Residues 32–108 form the ACT domain; sequence RLLLRCHDRP…VADKFGIDYR (77 aa). D255 is a catalytic residue.

This sequence belongs to the PurU family.

It catalyses the reaction (6R)-10-formyltetrahydrofolate + H2O = (6S)-5,6,7,8-tetrahydrofolate + formate + H(+). It functions in the pathway purine metabolism; IMP biosynthesis via de novo pathway; formate from 10-formyl-5,6,7,8-tetrahydrofolate: step 1/1. In terms of biological role, catalyzes the hydrolysis of 10-formyltetrahydrofolate (formyl-FH4) to formate and tetrahydrofolate (FH4). This Mycobacterium bovis (strain ATCC BAA-935 / AF2122/97) protein is Formyltetrahydrofolate deformylase.